Reading from the N-terminus, the 118-residue chain is Large ribosomal subunit protein bL17 (118 aa).

This sequence belongs to the bacterial ribosomal protein bL17 family. Part of the 50S ribosomal subunit. Contacts protein L32.

This Aster yellows witches'-broom phytoplasma (strain AYWB) protein is Large ribosomal subunit protein bL17.